A 2009-amino-acid polypeptide reads, in one-letter code: Sodium channel protein type 1 subunit alpha (2009 aa).

Residues 1–128 (MEQTVLVPPG…KIAIKILVHS (128 aa)) lie on the Cytoplasmic side of the membrane. The segment covering 28-48 (RIAEEKAKNPKPDKKDDDENG) has biased composition (basic and acidic residues). The tract at residues 28–60 (RIAEEKAKNPKPDKKDDDENGPKPNSDLEAGKN) is disordered. One copy of the I repeat lies at 110–454 (ILTPFNPLRK…QQMLEQLKKQ (345 aa)). A helical membrane pass occupies residues 129–146 (LFSMLIMCTILTNCVFMT). Topologically, residues 147–152 (MSNPPD) are extracellular. The helical transmembrane segment at 153–177 (WTKNVEYTFTGIYTFESLIKIIARG) threads the bilayer. Residues 178-188 (FCLEDFTFLRD) are Cytoplasmic-facing. Residues 189-205 (PWNWLDFTVITFAYVTE) traverse the membrane as a helical segment. Residues 206 to 213 (FVDLGNVS) lie on the Extracellular side of the membrane. The N-linked (GlcNAc...) asparagine glycan is linked to Asn-211. A helical membrane pass occupies residues 214–235 (ALRTFRVLRALKTISVIPGLKT). The Cytoplasmic segment spans residues 236–245 (IVGALIQSVK). A helical transmembrane segment spans residues 246–269 (KLSDVMILTVFCLSVFALIGLQLF). The Extracellular segment spans residues 270-369 (MGNLRNKCVQ…YGYTSFDTFS (100 aa)). 2 disulfides stabilise this stretch: Cys-277–Cys-345 and Cys-336–Cys-351. N-linked (GlcNAc...) asparagine glycosylation is found at Asn-284, Asn-295, Asn-301, Asn-306, and Asn-338. Positions 370–384 (WAFLSLFRLMTQDFW) form an intramembrane region, pore-forming. Topologically, residues 385–397 (ENLYQLTLRAAGK) are extracellular. Residues 398 to 423 (TYMIFFVLVIFLGSFYLINLILAVVA) traverse the membrane as a helical segment. Over 424 to 768 (MAYEEQNQAT…HIVNLVVMDP (345 aa)) the chain is Cytoplasmic. Positions 458-528 (AQQAAAATAS…EFHKSESEDS (71 aa)) are disordered. Position 470 is a phosphoserine (Ser-470). Residues 479 to 492 (LSDSSSEASKLSSK) are compositionally biased toward low complexity. Residues 495-506 (KERRNRRKKRKQ) are compositionally biased toward basic residues. Over residues 507-528 (KEQSGGEEKDDDEFHKSESEDS) the composition is skewed to basic and acidic residues. Phosphoserine is present on residues Ser-523, Ser-525, Ser-550, Ser-551, Ser-607, and Ser-730. Residues 584–628 (VGSENDFADDEHSTFEDNESRRDSLFVPRRHGERRNSNLSQTSRS) are disordered. The segment covering 593–607 (DEHSTFEDNESRRDS) has biased composition (basic and acidic residues). An II repeat occupies 750–1022 (CSPYWLKVKH…QIAVDRMHKG (273 aa)). Residues 769–787 (FVDLAITICIVLNTLFMAM) form a helical membrane-spanning segment. Residues 788–797 (EHYPMTEHFN) are Extracellular-facing. The helical transmembrane segment at 798-820 (HVLTVGNLVFTGIFTAEMFLKII) threads the bilayer. Over 821–830 (AMDPYYYFQE) the chain is Cytoplasmic. The helical transmembrane segment at 831-849 (GWNIFDGFIVTLSLVELGL) threads the bilayer. Residues 850–854 (ANVEG) lie on the Extracellular side of the membrane. A helical transmembrane segment spans residues 855–874 (LSVLRSFRLLRVFKLAKSWP). Topologically, residues 875 to 891 (TLNMLIKIIGNSVGALG) are cytoplasmic. A helical membrane pass occupies residues 892 to 912 (NLTLVLAIIVFIFAVVGMQLF). Over 913 to 938 (GKSYKDCVCKIATDCKLPRWHMNDFF) the chain is Extracellular. Cysteines 921 and 927 form a disulfide. Positions 939–952 (HSFLIVFRVLCGEW) form an intramembrane region, pore-forming. The Extracellular portion of the chain corresponds to 953–965 (IETMWDCMEVAGQ). A disulfide bridge links Cys-959 with Cys-968. Residues 966 to 992 (AMCLTVFMMVMVIRNLVVLNLFLALLL) form a helical membrane-spanning segment. Over 993 to 1218 (SSFSADNLAA…RTCFRIVEHN (226 aa)) the chain is Cytoplasmic. Residues 1129–1163 (TEDFSSESDLEESKEKLNESSSSSEGSTVDIGAPA) are disordered. Residues 1200 to 1514 (RGKQWWNLRR…KKYYNAMKKL (315 aa)) form an III repeat. Residues 1219 to 1237 (WFETFIVFMILLSSGALAF) form a helical membrane-spanning segment. Residues 1238-1250 (EDIYIDQRKTIKT) lie on the Extracellular side of the membrane. A helical transmembrane segment spans residues 1251–1276 (MLEYADKVFTYIFILEMLLKWVAYGY). The Cytoplasmic portion of the chain corresponds to 1277–1278 (QT). A helical transmembrane segment spans residues 1279–1304 (YFTNAWCWLDFLIVDVSLVSLTANAL). At 1305–1313 (GYSELGAIK) the chain is on the extracellular side. Residues 1314–1332 (SLRTLRALRPLRALSRFEG) form a helical membrane-spanning segment. At 1333-1345 (MRVVVNALLGAIP) the chain is on the cytoplasmic side. The helical transmembrane segment at 1346 to 1369 (SIMNVLLVCLIFWLIFSIMGVNLF) threads the bilayer. Residues 1370–1415 (AGKFYHCVNTTTGDTFEITEVNNHSDCLKLIERNETARWKNVKVNF) lie on the Extracellular side of the membrane. A disulfide bridge links Cys-1376 with Cys-1396. Residues Asn-1378, Asn-1392, and Asn-1403 are each glycosylated (N-linked (GlcNAc...) asparagine). The segment at residues 1416–1433 (DNVGFGYLSLLQVATFKG) is an intramembrane region (pore-forming). Topologically, residues 1434-1457 (WMDIMYAAVDSRNVELQPKYEESL) are extracellular. The helical transmembrane segment at 1458 to 1483 (YMYLYFVIFIIFGSFFTLNLFIGVII) threads the bilayer. Residues 1484 to 1541 (DNFNQQKKKFGGQDIFMTEEQKKYYNAMKKLGSKKPQKPIPRPGNKFQGMVFDFVTRQ) are Cytoplasmic-facing. At Ser-1516 the chain carries Phosphoserine; by PKC. The IV repeat unit spans residues 1523–1821 (IPRPGNKFQG…WEKFDPDATQ (299 aa)). Residues 1542 to 1560 (VFDISIMILICLNMVTMMV) form a helical membrane-spanning segment. At 1561–1571 (ETDDQSDYVTS) the chain is on the extracellular side. The tract at residues 1561–1571 (ETDDQSDYVTS) is S1-S2 loop of repeat IV. A helical transmembrane segment spans residues 1572 to 1593 (ILSRINLVFIVLFTGECVLKLI). Topologically, residues 1594–1601 (SLRHYYFT) are cytoplasmic. A helical membrane pass occupies residues 1602–1623 (IGWNIFDFVVVILSIVGMFLAE). Positions 1619–1636 (MFLAELIEKYFVSPTLFR) are S3b-S4 loop of repeat IV. Over 1624–1636 (LIEKYFVSPTLFR) the chain is Extracellular. Residues 1637–1655 (VIRLARIGRILRLIKGAKG) traverse the membrane as a helical segment. The Cytoplasmic segment spans residues 1656 to 1665 (IRTLLFALMM). A helical transmembrane segment spans residues 1666-1688 (SLPALFNIGLLLFLVMFIYAIFG). At 1689–1711 (MSNFAYVKREVGIDDMFNFETFG) the chain is on the extracellular side. Positions 1712 to 1726 (NSMICLFQITTSAGW) form an intramembrane region, pore-forming. Residues 1727-1759 (DGLLAPILNSKPPDCDPNKVNPGSSVKGDCGNP) are Extracellular-facing. A disulfide bridge connects residues Cys-1741 and Cys-1756. The helical transmembrane segment at 1760 to 1788 (SVGIFFFVSYIIISFLVVVNMYIAVILEN) threads the bilayer. The Cytoplasmic segment spans residues 1789 to 2009 (FSVATEESAE…EGKDEKAKGK (221 aa)). The 30-residue stretch at 1915–1944 (EEVSAVIIQRAYRRHLLKRTVKQASFTYNK) folds into the IQ domain. A disordered region spans residues 1986 to 2009 (YDRVTKPIVEKHEQEGKDEKAKGK). The segment covering 1988–2009 (RVTKPIVEKHEQEGKDEKAKGK) has biased composition (basic and acidic residues).

Belongs to the sodium channel (TC 1.A.1.10) family. Nav1.1/SCN1A subfamily. In terms of assembly, the Nav1.1 voltage-gated sodium channel consists of an ion-conducting alpha subunit SCN1A which is functional on its own regulated by one or more beta-1 (SCN1B), beta-2 (SCN2B), beta-3 (SCN3B) and beta-4 (SCN4B) subunits. SCN1B and SCN3B are non-covalently associated with SCN1A. SCN2B and SCN4B are disulfide-linked to SCN1A. SCN1B regulates both the expression at the plasma membrane and the voltage dependence of Nav1.1 inactivation. SCN3B and SCN4B reduce Nav1.1 conductance. Probably interacts with TMEM233; modulates the gating properties of NaV1.1. Interacts with FGF13; regulates the steady-state inactivation of Nav.1.1. In terms of processing, phosphorylation at Ser-1516 by PKC in a highly conserved cytoplasmic loop slows inactivation of the sodium channel and reduces peak sodium currents.

The protein resides in the cell membrane. The catalysed reaction is Na(+)(in) = Na(+)(out). With respect to regulation, activated by the spider toxins Hm1a and Hm1b (H.maculata, AC P60992 and AC P0DOC5) eliciting acute pain and mechanical allodynia. Inhibited by the conotoxin GVIIJ. Functionally, pore-forming subunit of Nav1.1, a voltage-gated sodium (Nav) channel that directly mediates the depolarizing phase of action potentials in excitable membranes. Navs, also called VGSCs (voltage-gated sodium channels) or VDSCs (voltage-dependent sodium channels), operate by switching between closed and open conformations depending on the voltage difference across the membrane. In the open conformation they allow Na(+) ions to selectively pass through the pore, along their electrochemical gradient. The influx of Na(+) ions provokes membrane depolarization, initiating the propagation of electrical signals throughout cells and tissues. By regulating the excitability of neurons, ensures that they respond appropriately to synaptic inputs, maintaining the balance between excitation and inhibition in brain neural circuits. Nav1.1 plays a role in controlling the excitability and action potential propagation from somatosensory neurons, thereby contributing to the sensory perception of mechanically-induced pain. This is Sodium channel protein type 1 subunit alpha from Rattus norvegicus (Rat).